A 207-amino-acid polypeptide reads, in one-letter code: Guanylate kinase (207 aa).

Residues 6–185 (GLLIVLSGPS…AKNRIQSIVE (180 aa)) form the Guanylate kinase-like domain. 13 to 20 (GPSGVGKG) contacts ATP.

It belongs to the guanylate kinase family.

Its subcellular location is the cytoplasm. It carries out the reaction GMP + ATP = GDP + ADP. Its function is as follows. Essential for recycling GMP and indirectly, cGMP. This Staphylococcus epidermidis (strain ATCC 12228 / FDA PCI 1200) protein is Guanylate kinase.